The chain runs to 320 residues: Cytochrome c biogenesis protein CcsA (320 aa).

8 helical membrane passes run 13–33 (ISFS…FLLV), 46–66 (GMIV…IYSG), 73–93 (LYES…VSYL), 102–122 (LSAI…SGLL), 147–167 (MVLG…LLVI), 226–246 (IISL…VWAN), 259–274 (ETWA…IYFH), and 289–309 (VASM…LLGI).

Belongs to the CcmF/CycK/Ccl1/NrfE/CcsA family. As to quaternary structure, may interact with Ccs1.

The protein resides in the plastid. It is found in the chloroplast thylakoid membrane. Its function is as follows. Required during biogenesis of c-type cytochromes (cytochrome c6 and cytochrome f) at the step of heme attachment. The chain is Cytochrome c biogenesis protein CcsA from Gossypium hirsutum (Upland cotton).